Here is a 533-residue protein sequence, read N- to C-terminus: E3 ubiquitin-protein ligase arih1l (533 aa).

2 disordered regions span residues 1–35 and 48–73; these read MDSD…EAVD and PAVA…QEDE. The TRIAD supradomain stretch occupies residues 158-369; the sequence is QDLPCQICYL…SAWYNCNRYN (212 aa). Positions 162, 165, 179, 181, 184, 187, 207, 212, 252, 257, 273, 275, 280, 283, 288, 293, 320, and 323 each coordinate Zn(2+). The segment at 162–212 adopts an RING-type 1 zinc-finger fold; it reads CQICYLNYPNSYFTGLECGHKFCMQCWGDYLTTKIIEEGMGQTISCPAHNC. The IBR-type zinc finger occupies 232-293; sequence LKYQHLITNS…GENWHDPVKC (62 aa). Residues 320-351 form an RING-type 2; atypical zinc finger; that stretch reads CPKCHVTIEKDGGCNHMVCRNQNCKAEFCWVC. Cys333 is an active-site residue. Zn(2+) contacts are provided by Cys338, Cys343, Cys348, Cys351, His358, and Cys365. Residues 409–425 adopt a coiled-coil conformation; it reads KLYAQVKQKMEEMQQHN.

It belongs to the RBR family. Ariadne subfamily.

The protein resides in the cytoplasm. The enzyme catalyses [E2 ubiquitin-conjugating enzyme]-S-ubiquitinyl-L-cysteine + [acceptor protein]-L-lysine = [E2 ubiquitin-conjugating enzyme]-L-cysteine + [acceptor protein]-N(6)-ubiquitinyl-L-lysine.. It functions in the pathway protein modification; protein ubiquitination. In terms of biological role, E3 ubiquitin-protein ligase, which catalyzes polyubiquitination of target proteins together with ubiquitin-conjugating enzyme E2 ube2l3. The chain is E3 ubiquitin-protein ligase arih1l (arih1l) from Danio rerio (Zebrafish).